A 430-amino-acid polypeptide reads, in one-letter code: ATP-dependent RNA helicase RhlB (430 aa).

The Q motif motif lies at 9–37 (QKFSDFALHPQVIEALETKGFHNCTPIQA). The 180-residue stretch at 40–219 (LPFTLSGRDV…FENMNNAEYV (180 aa)) folds into the Helicase ATP-binding domain. 53 to 60 (AQTGTGKT) serves as a coordination point for ATP. Positions 165–168 (DEAD) match the DEAD box motif. The 146-residue stretch at 245–390 (RLLQTLIEEE…VSRYNSDALM (146 aa)) folds into the Helicase C-terminal domain. The interval 388-430 (ALMTDLPPPKRLTRNRSGNGPRRGGNNNRRSSASRSPNRKRSG) is disordered. Over residues 402 to 423 (NRSGNGPRRGGNNNRRSSASRS) the composition is skewed to low complexity.

This sequence belongs to the DEAD box helicase family. RhlB subfamily. As to quaternary structure, component of the RNA degradosome, which is a multiprotein complex involved in RNA processing and mRNA degradation.

The protein resides in the cytoplasm. It catalyses the reaction ATP + H2O = ADP + phosphate + H(+). Functionally, DEAD-box RNA helicase involved in RNA degradation. Has RNA-dependent ATPase activity and unwinds double-stranded RNA. The protein is ATP-dependent RNA helicase RhlB of Erwinia tasmaniensis (strain DSM 17950 / CFBP 7177 / CIP 109463 / NCPPB 4357 / Et1/99).